Reading from the N-terminus, the 106-residue chain is ATP-dependent Clp protease adapter protein ClpS (106 aa).

Residues 1–10 (MSQKTVHDQD) are compositionally biased toward basic and acidic residues. Positions 1 to 22 (MSQKTVHDQDNALLLETGNTKV) are disordered.

It belongs to the ClpS family. Binds to the N-terminal domain of the chaperone ClpA.

Its function is as follows. Involved in the modulation of the specificity of the ClpAP-mediated ATP-dependent protein degradation. The chain is ATP-dependent Clp protease adapter protein ClpS from Xylella fastidiosa (strain 9a5c).